The sequence spans 101 residues: MAKKSMIEREKKRQRLVEKYREKRQQLKAAMADPNIDQATRMELHAQLQKLPRASSPTRLRNRCWKTGRPRGYFRDFGLCRNSLREMAHRGLLPGVVKSSW.

It belongs to the universal ribosomal protein uS14 family. Part of the 30S ribosomal subunit. Contacts proteins S3 and S10.

Its function is as follows. Binds 16S rRNA, required for the assembly of 30S particles and may also be responsible for determining the conformation of the 16S rRNA at the A site. This Synechococcus sp. (strain JA-2-3B'a(2-13)) (Cyanobacteria bacterium Yellowstone B-Prime) protein is Small ribosomal subunit protein uS14.